A 333-amino-acid chain; its full sequence is Methylosome protein WDR77 (333 aa).

WD repeat units follow at residues 16–59, 68–106, 113–152, 155–195, 199–240, 243–283, and 285–328; these read CMEV…GAPN, QTEA…SLLV, EHDD…VLKS, AHSS…PATR, CASD…SAQT, VHSQ…VFRD, and SHRD…NLIA.

Heterotetramer; dimer of heterodimer with prmt5. Interacts with histone h2a and h4 and with nucleoplasmin. As to expression, detected in egg (at protein level).

The protein localises to the cytoplasm. It localises to the nucleus. In terms of biological role, non-catalytic component of the 20S prmt5-containing methyltransferase complex, which modifies specific arginines to dimethylarginines in several spliceosomal Sm proteins and histones. Required for normal prmt5 methyltransferase activity. The protein is Methylosome protein WDR77 of Xenopus laevis (African clawed frog).